Reading from the N-terminus, the 457-residue chain is Flavohemoprotein-1 (457 aa).

One can recognise a Globin domain in the interval 2–157 (ALSEDTIKAV…LADLLIKREE (156 aa)). His-106 contributes to the heme b binding site. Catalysis depends on charge relay system residues Tyr-116 and Glu-156. Residues 168-456 (GGWRQTRTFR…FEMFGPFKAS (289 aa)) are reductase. Residues 171–278 (RQTRTFRVEE…APPYGDFFLR (108 aa)) form the FAD-binding FR-type domain. FAD is bound by residues Tyr-210 and 227 to 230 (RQYS). 320–325 (GIGQTP) is an NADP(+) binding site. Residue 449–452 (MFGP) participates in FAD binding.

This sequence belongs to the globin family. Two-domain flavohemoproteins subfamily. It in the C-terminal section; belongs to the flavoprotein pyridine nucleotide cytochrome reductase family. In terms of assembly, monomer. Heme b serves as cofactor. It depends on FAD as a cofactor.

It carries out the reaction 2 nitric oxide + NADPH + 2 O2 = 2 nitrate + NADP(+) + H(+). The catalysed reaction is 2 nitric oxide + NADH + 2 O2 = 2 nitrate + NAD(+) + H(+). In terms of biological role, flavohemoprotein involved in nitric oxide (NO) detoxification in an aerobic process, termed nitric oxide dioxygenase (NOD) reaction that utilizes O(2) and NAD(P)H to convert NO to nitrate, which protects the protozoan parasite from various noxious nitrogen compounds. Therefore, plays a central role in the inducible response to nitrosative stress. May also be involved in O(2) detoxification. In Giardia intestinalis (strain P15) (Giardia lamblia), this protein is Flavohemoprotein-1 (hmpA-1).